A 142-amino-acid chain; its full sequence is U1 small nuclear ribonucleoprotein C (142 aa).

The Matrin-type zinc-finger motif lies at 4–36 (YYCDYCDTFLTHDSPSVRKTHNGGRKHKDNVRM).

It belongs to the U1 small nuclear ribonucleoprotein C family. In terms of assembly, U1 snRNP is composed of the 7 core Sm proteins B/B', D1, D2, D3, E, F and G that assemble in a heptameric protein ring on the Sm site of the small nuclear RNA to form the core snRNP, and at least 3 U1 snRNP-specific proteins U1-70K, U1-A and U1-C. U1-C interacts with U1 snRNA and the 5' splice-site region of the pre-mRNA.

It is found in the nucleus. Its function is as follows. Component of the spliceosomal U1 snRNP, which is essential for recognition of the pre-mRNA 5' splice-site and the subsequent assembly of the spliceosome. U1-C is directly involved in initial 5' splice-site recognition for both constitutive and regulated alternative splicing. The interaction with the 5' splice-site seems to precede base-pairing between the pre-mRNA and the U1 snRNA. Stimulates commitment or early (E) complex formation by stabilizing the base pairing of the 5' end of the U1 snRNA and the 5' splice-site region. This is U1 small nuclear ribonucleoprotein C from Caenorhabditis elegans.